The chain runs to 131 residues: Large ribosomal subunit protein bL17 (131 aa).

Belongs to the bacterial ribosomal protein bL17 family. In terms of assembly, part of the 50S ribosomal subunit. Contacts protein L32.

The chain is Large ribosomal subunit protein bL17 from Teredinibacter turnerae (strain ATCC 39867 / T7901).